Consider the following 506-residue polypeptide: Subtilisin-like serine protease Cur l 4.0101 (506 aa).

The signal sequence occupies residues 1–15; that stretch reads MKYSLIAALPALAAA. A propeptide spans 16 to 135 (removed in mature form); sequence SPTFSTETIH…IERDSEVRIL (120 aa). The 92-residue stretch at 43-134 folds into the Inhibitor I9 domain; sequence SYMVVFKKHV…YIERDSEVRI (92 aa). Residues 59-79 are disordered; that stretch reads HDWVQSVHSKNTQERMELRKR. Residues 69 to 79 are compositionally biased toward basic and acidic residues; it reads NTQERMELRKR. The Peptidase S8 domain maps to 147 to 453; sequence PWGLARISHR…GGSSNYTDII (307 aa). Catalysis depends on charge relay system residues D183 and H215. 2 N-linked (GlcNAc...) asparagine glycosylation sites follow: N245 and N285. The active-site Charge relay system is S381. N448 carries N-linked (GlcNAc...) asparagine glycosylation. Positions 459–506 are cleaved as a propeptide — removed in mature form; the sequence is TVKKAASKEEEKESEFRITIPSLSELEDDFEKAKESAGRKAHHVGGKL.

The protein belongs to the peptidase S8 family.

In terms of biological role, serine protease. The chain is Subtilisin-like serine protease Cur l 4.0101 from Cochliobolus lunatus (Filamentous fungus).